The sequence spans 209 residues: NAD(P)H dehydrogenase (quinone) (209 aa).

The region spanning 4 to 199 (VNIIFHSVHA…EMARYQGRHV (196 aa)) is the Flavodoxin-like domain. FMN contacts are provided by residues 10–15 (SVHAHI) and 87–89 (TRY). W107 provides a ligand contact to substrate. FMN-binding positions include 122–128 (SSGTQHG) and H143.

It belongs to the WrbA family. Requires FMN as cofactor.

It catalyses the reaction a quinone + NADH + H(+) = a quinol + NAD(+). The catalysed reaction is a quinone + NADPH + H(+) = a quinol + NADP(+). The polypeptide is NAD(P)H dehydrogenase (quinone) (Methanosarcina mazei (strain ATCC BAA-159 / DSM 3647 / Goe1 / Go1 / JCM 11833 / OCM 88) (Methanosarcina frisia)).